Here is a 336-residue protein sequence, read N- to C-terminus: N-acetyl-gamma-glutamyl-phosphate reductase (336 aa).

Residue C148 is part of the active site.

Belongs to the NAGSA dehydrogenase family. Type 1 subfamily.

The protein resides in the cytoplasm. It catalyses the reaction N-acetyl-L-glutamate 5-semialdehyde + phosphate + NADP(+) = N-acetyl-L-glutamyl 5-phosphate + NADPH + H(+). The protein operates within amino-acid biosynthesis; L-arginine biosynthesis; N(2)-acetyl-L-ornithine from L-glutamate: step 3/4. Functionally, catalyzes the NADPH-dependent reduction of N-acetyl-5-glutamyl phosphate to yield N-acetyl-L-glutamate 5-semialdehyde. The polypeptide is N-acetyl-gamma-glutamyl-phosphate reductase (Campylobacter curvus (strain 525.92)).